Consider the following 336-residue polypeptide: MAEETAPPCGPVSTGGSLSPEKMEKRTCALCPDGHEWSVIYFAPSANIAAHENCLLYSSGLVECGPHDPRNPARSFAVKSVKKEIWRGRRLKCSLCNKGGATVGCDLSSCRKSYHYVCAKKDHAIPQVDEDLGTYKIFCPEHPPQQEETTERADSPSVKKTGKKKSLSSGPPTEPKKMKFSRFKRLMKEEPHGHKDAAVKAPFLKKCLEAGLLTELFEQILEKMDSIHGRFMDETASESDYEGIKTLLFDCGLFGDILRKFQEVIKSKTCEYEERLNQMKQKLEALADLQENLCSFQECGDLDPSGSTSGSLLPPEDHQCRCQESPEVQAGSGDSL.

Positions 1–20 (MAEETAPPCGPVSTGGSLSP) are disordered. Residues 25-61 (KRTCALCPDGHEWSVIYFAPSANIAAHENCLLYSSGL) form a C2HC pre-PHD-type zinc finger. The segment at 91–143 (LKCSLCNKGGATVGCDLSSCRKSYHYVCAKKDHAIPQVDEDLGTYKIFCPEHP) adopts a PHD-type zinc-finger fold. Disordered stretches follow at residues 139 to 179 (CPEH…KKMK) and 303 to 336 (DPSGSTSGSLLPPEDHQCRCQESPEVQAGSGDSL). Positions 303–314 (DPSGSTSGSLLP) are enriched in low complexity.

In terms of assembly, interacts with BRCA1 and RELA.

Its subcellular location is the nucleus. In terms of biological role, positive regulator of Th1-type cytokine gene expression. This Rattus norvegicus (Rat) protein is PHD finger protein 11 (Phf11).